The primary structure comprises 302 residues: Short-chain dehydrogenase/reductase 3 (302 aa).

4 helical membrane passes run 9 to 29, 170 to 190, 195 to 215, and 253 to 273; these read LVVF…GLVL, IVCL…DYCT, AFAF…VSAT, and AVQL…LIIL. Ser-175 contributes to the substrate binding site. Residue Tyr-188 is the Proton acceptor of the active site.

It belongs to the short-chain dehydrogenases/reductases (SDR) family. In the retina, expressed in cone but not rod outer segments.

The protein localises to the membrane. The catalysed reaction is all-trans-retinol + NADP(+) = all-trans-retinal + NADPH + H(+). Its function is as follows. Catalyzes the reduction of all-trans-retinal to all-trans-retinol in the presence of NADPH. This Bos taurus (Bovine) protein is Short-chain dehydrogenase/reductase 3 (DHRS3).